A 302-amino-acid chain; its full sequence is Spheroidin-like protein (302 aa).

An N-terminal signal peptide occupies residues 1–19 (MIALLIALFAAIHAPAVRS). Residues Asn-193 and Asn-293 are each glycosylated (N-linked (GlcNAc...) asparagine; by host).

As to quaternary structure, homodimer; disulfide-linked.

It localises to the host membrane. Component of the virus occlusion bodies, which are large proteinaceous structures (polyhedra), that protect the virus from the outside environment for extended periods until they are ingested by insect larvae. This chain is Spheroidin-like protein (SLP), found in Autographa californica nuclear polyhedrosis virus (AcMNPV).